The following is a 142-amino-acid chain: uncharacterized protein (142 aa).

Residues 1 to 20 (MPSVNEFFIFFLIVWHTCEC) form the signal peptide. Asparagine 80 carries an N-linked (GlcNAc...) asparagine glycan.

This is an uncharacterized protein from Dictyostelium discoideum (Social amoeba).